A 78-amino-acid polypeptide reads, in one-letter code: Small ribosomal subunit protein bS18 (78 aa).

The protein belongs to the bacterial ribosomal protein bS18 family. In terms of assembly, part of the 30S ribosomal subunit. Forms a tight heterodimer with protein bS6.

In terms of biological role, binds as a heterodimer with protein bS6 to the central domain of the 16S rRNA, where it helps stabilize the platform of the 30S subunit. This Geobacillus kaustophilus (strain HTA426) protein is Small ribosomal subunit protein bS18.